The sequence spans 91 residues: DNA-directed RNA polymerase subunit omega (91 aa).

A disordered region spans residues 66-91 (QMPPPLPNFPGAANREATGAEDAAGE).

It belongs to the RNA polymerase subunit omega family. In terms of assembly, the RNAP catalytic core consists of 2 alpha, 1 beta, 1 beta' and 1 omega subunit. When a sigma factor is associated with the core the holoenzyme is formed, which can initiate transcription.

The catalysed reaction is RNA(n) + a ribonucleoside 5'-triphosphate = RNA(n+1) + diphosphate. In terms of biological role, promotes RNA polymerase assembly. Latches the N- and C-terminal regions of the beta' subunit thereby facilitating its interaction with the beta and alpha subunits. This is DNA-directed RNA polymerase subunit omega from Acidithiobacillus ferrooxidans (strain ATCC 23270 / DSM 14882 / CIP 104768 / NCIMB 8455) (Ferrobacillus ferrooxidans (strain ATCC 23270)).